A 470-amino-acid chain; its full sequence is Neuronal acetylcholine receptor subunit beta-4 (470 aa).

The signal sequence occupies residues 1 to 3; the sequence is STA. At 4–216 the chain is on the extracellular side; it reads ADAEEKLMNH…IIKRKPLFYT (213 aa). 3 N-linked (GlcNAc...) asparagine glycosylation sites follow: N29, N118, and N146. A disulfide bridge links C133 with C147. A helical transmembrane segment spans residues 217-237; sequence INLIIPCVLITSLAILVFYLP. Topologically, residues 238–245 are cytoplasmic; it reads SDCGEKMT. Residue E242 coordinates Na(+). A helical membrane pass occupies residues 246 to 266; sequence LCISVLLALTVFLLLISKIVP. The Extracellular portion of the chain corresponds to 267–278; sequence PTSLDVPLIGKY. Residues 279–299 traverse the membrane as a helical segment; that stretch reads LMFTMVLVTFSIVTSVCVLNV. Residues 300 to 438 are Cytoplasmic-facing; it reads HHRSPSTHTM…WKYVAMVVDR (139 aa). Residues 439–459 traverse the membrane as a helical segment; sequence LFLWIFVLVCVLGTVGLFLQP. Residues 460–470 lie on the Extracellular side of the membrane; the sequence is LFQNHIAATNP.

The protein belongs to the ligand-gated ion channel (TC 1.A.9) family. Acetylcholine receptor (TC 1.A.9.1) subfamily. Beta-4/CHRNB4 sub-subfamily. As to quaternary structure, neuronal AChR is composed of two different types of subunits: alpha and beta. CHRNB4/Beta-4 subunit can be combined to CHRNA2/alpha-2, CHRNA3/alpha-3 or CHRNA4/alpha-4, CHRNA5/alpha-5 and CHRNB3/beta-3 to give rise to functional receptors.

It localises to the synaptic cell membrane. It is found in the cell membrane. It carries out the reaction Ca(2+)(in) = Ca(2+)(out). It catalyses the reaction K(+)(in) = K(+)(out). The enzyme catalyses Na(+)(in) = Na(+)(out). Activated by a myriad of ligands such as acetylcholine, cytisine, nicotine, choline and epibatidine. The heteropentamer CHRNA3:CHRNB4 activity is blocked by the alpha-conotoxin ImI and AuIB. Its function is as follows. Component of neuronal acetylcholine receptors (nAChRs) that function as pentameric, ligand-gated cation channels with high calcium permeability among other activities. nAChRs are excitatory neurotrasnmitter receptors formed by a collection of nAChR subunits known to mediate synaptic transmission in the nervous system and the neuromuscular junction. Each nAchR subunit confers differential attributes to channel properties, including activation, deactivation and desensitization kinetics, pH sensitivity, cation permeability, and binding to allosteric modulators. CHRNB4 forms heteropentameric neuronal acetylcholine receptors with CHRNA2, CHRNA3 and CHRNA4, as well as CHRNA5 and CHRNB3 as accesory subunits. CHRNA3:CHRNB4 being predominant in neurons of the autonomic ganglia, it is known as ganglionic nicotinic receptor. CHRNA3:CHRNB4 or CHRNA3:CHRNA5:CHRNB4 play also an important role in the habenulo-interpeduncular tract, modulating the mesolimbic dopamine system and affecting reward circuits and addiction. Hypothalamic CHRNA3:CHRNB4 nAChR activation by nicotine leads to activation of POMC neurons and a decrease in food intake. The sequence is that of Neuronal acetylcholine receptor subunit beta-4 (CHRNB4) from Gallus gallus (Chicken).